The sequence spans 577 residues: MGLCHGKPIEQQSKNLPISNEIEETPKNSSQKAKSSGFPFYSPSPLPSLFKTSPAVSSSSVSSTPLRIFKRPFPPPSPAKHIRALLARRHGSVKPNEASIPEGSECEVGLDKKFGFSKQFASHYEIDGEVGRGHFGYTCSAKGKKGSLKGQDVAVKVIPKSKMTTAIAIEDVRREVKILRALTGHKNLVQFYDAFEDDENVYIVMELCQGGELLDKILQRGGKYSEVDAKKVMIQILSVVAYCHLQGVVHRDLKPENFLFTTKDESSPLKAIDFGLSDYVRPDERLNDIVGSAYYVAPEVLHRTYGTEADMWSIGVIAYILLCGSRPFWARSESGIFRAVLKAEPNFEEAPWPSLSPDAVDFVKRLLNKDYRKRLTAAQALCHPWLVGSHELKIPSDMIIYKLVKVYIMSSSLRKSALAALAKTLTVPQLTYLQEQFNLLGPSKNGYISMQNYKTAILKSSTEATKDSRVLDFVHMISCLQYKKLDFEEFCASALSVYQLEAMETWEQHARRAYELYEKDGNRVIMIEELATELGLGPSVPVHVVLQDWIRHSDGKLSFLGFVRLLHGVSSRTLQKA.

A disordered region spans residues 1–38 (MGLCHGKPIEQQSKNLPISNEIEETPKNSSQKAKSSGF). Glycine 2 carries the N-myristoyl glycine lipid modification. The Protein kinase domain occupies 124–386 (YEIDGEVGRG…AAQALCHPWL (263 aa)). Residues 130 to 138 (VGRGHFGYT) and lysine 156 contribute to the ATP site. The active-site Proton acceptor is aspartate 252. Serine 292 is subject to Phosphoserine. The residue at position 334 (serine 334) is a Phosphoserine; by CPK1, CPK10 and CPK34. Residues 391–421 (ELKIPSDMIIYKLVKVYIMSSSLRKSALAAL) are autoinhibitory domain. A calmodulin binding (CaMBD) region spans residues 410–430 (SSSLRKSALAALAKTLTVPQL). 4 consecutive EF-hand domains span residues 428 to 464 (PQLTYLQEQFNLLGPSKNGYISMQNYKTAILKSSTEA), 465 to 500 (TKDSRVLDFVHMISCLQYKKLDFEEFCASALSVYQL), 501 to 540 (EAMETWEQHARRAYELYEKDGNRVIMIEELATELGLGPSV), and 543 to 572 (HVVLQDWIRHSDGKLSFLGFVRLLHGVSSR). Residues serine 443, asparagine 445, tyrosine 447, lysine 484, glutamate 489, aspartate 520, asparagine 522, glutamate 529, aspartate 554, and lysine 556 each coordinate Ca(2+). Residue serine 558 is modified to Phosphoserine.

It belongs to the protein kinase superfamily. Ser/Thr protein kinase family. CDPK subfamily. In terms of assembly, binds calmodulin (CaM) in a calcium-dependent manner. Post-translationally, autophosphorylated.

It localises to the membrane. The enzyme catalyses L-seryl-[protein] + ATP = O-phospho-L-seryl-[protein] + ADP + H(+). The catalysed reaction is L-threonyl-[protein] + ATP = O-phospho-L-threonyl-[protein] + ADP + H(+). Activated by calcium and calmodulin. Autophosphorylation may play an important role in the regulation of the kinase activity. May play a role in signal transduction pathways that involve calcium as a second messenger. The sequence is that of CDPK-related kinase 7 (CRK7) from Arabidopsis thaliana (Mouse-ear cress).